Reading from the N-terminus, the 180-residue chain is Large ribosomal subunit protein uL5 (180 aa).

It belongs to the universal ribosomal protein uL5 family. Part of the 50S ribosomal subunit; part of the 5S rRNA/L5/L18/L25 subcomplex. Contacts the 5S rRNA and the P site tRNA. Forms a bridge to the 30S subunit in the 70S ribosome.

Its function is as follows. This is one of the proteins that bind and probably mediate the attachment of the 5S RNA into the large ribosomal subunit, where it forms part of the central protuberance. In the 70S ribosome it contacts protein S13 of the 30S subunit (bridge B1b), connecting the 2 subunits; this bridge is implicated in subunit movement. Contacts the P site tRNA; the 5S rRNA and some of its associated proteins might help stabilize positioning of ribosome-bound tRNAs. This chain is Large ribosomal subunit protein uL5, found in Streptococcus pyogenes serotype M49 (strain NZ131).